The chain runs to 606 residues: MNIFPSLMLTSLFTLTLPIIASTLNIHKNSNTPHHMKNIISFAFIISLIPTMMFIYSGQEMIISNWHWMTTQTLKLSLSFKLDYFSMIFVPVALFVTWSIMEFSIWYMHSDPHITQFFKYLLMFLITMMILVTANNLFQLFIGWEGVGIMSFLLIGWWYGRTDANTAALQAILYNRIGDIGFIMSMAWFLSNMNSWDLQQIFTLDPNHTNLPLMGLLLAATGKSAQFGLHPWLPSAMEGPTPVSALLHSSTMVVAGVFLLIRFHPLMENNKTAQTLTLCLGAITTLFTAICALTQNDIKKIIAFSTSSQLGLMIVTIGINQPHLAFLHICTHAFFKAMLFMCSGSIIHNLNNEQDIRKMGGLFKTMPFTATSLIIGSFALTGMPFLTGFYSKDLIIETANTSYTNAWALLMTLIATSLTAAYSTRMIFFTLLGQPRFPTLITINENNPHLTNSIKRLLIGSIFAGFFISNNIYPTTTPKMTMPSYLKLMALIVTILGFALALELSLATYNLKFKHPSNPLKFSSLLGYFPTIFHRLPPSMGLLASQKSASLLLDSMWLENILPKSISLFQMKSSTLVSNQKGLIKLYFLSFLITLTLSLLLLTPHG.

16 helical membrane passes run methionine 1–alanine 21, asparagine 38–glycine 58, methionine 87–tyrosine 107, isoleucine 114–alanine 134, leucine 140–glycine 160, alanine 171–serine 191, leucine 213–leucine 233, threonine 241–isoleucine 261, alanine 273–leucine 293, isoleucine 301–asparagine 320, alanine 325–isoleucine 347, methionine 366–leucine 386, leucine 409–phenylalanine 429, leucine 457–threonine 477, leucine 488–threonine 508, and glycine 582–leucine 602.

It belongs to the complex I subunit 5 family. In terms of assembly, core subunit of respiratory chain NADH dehydrogenase (Complex I) which is composed of 45 different subunits.

Its subcellular location is the mitochondrion inner membrane. It carries out the reaction a ubiquinone + NADH + 5 H(+)(in) = a ubiquinol + NAD(+) + 4 H(+)(out). Core subunit of the mitochondrial membrane respiratory chain NADH dehydrogenase (Complex I) which catalyzes electron transfer from NADH through the respiratory chain, using ubiquinone as an electron acceptor. Essential for the catalytic activity and assembly of complex I. This is NADH-ubiquinone oxidoreductase chain 5 (MT-ND5) from Rhinoceros unicornis (Greater Indian rhinoceros).